Reading from the N-terminus, the 616-residue chain is Protein LNK1 (616 aa).

4 disordered regions span residues 72–112 (GKNP…HGFN), 361–398 (ESKS…GPTV), 410–434 (ANLL…KTDS), and 567–616 (SSLS…SDNN). Residues 371-395 (KPSPSSASNESYTSNHAQSIESLQG) are compositionally biased toward polar residues. The segment covering 567–577 (SSLSSDNNVLS) has biased composition (low complexity). The span at 594–608 (RIEKQEETTELRPEA) shows a compositional bias: basic and acidic residues.

In terms of assembly, interacts with CCA1, LHY, REV4 and REV8, but not with PRR7 or PRR9. Expressed in roots, stems, leaves, seedlings, cotyledons, inflorescences and siliques. Highest expression in root tips, young leaves and vasculatur tissues.

It is found in the nucleus. Functionally, transcriptional coactivator necessary for expression of the clock genes PRR5 and TOC1. Antagonizes REV8 function in the regulation of anthocyanin accumulation. Involved in red light input to the clock. Activates clock-controlled genes with afternoon peak. Mediates light inhibition of hypocotyl elongation. The polypeptide is Protein LNK1 (Arabidopsis thaliana (Mouse-ear cress)).